We begin with the raw amino-acid sequence, 349 residues long: tRNA pseudouridine synthase D (349 aa).

Substrate is bound at residue F27. Catalysis depends on D80, which acts as the Nucleophile. A substrate-binding site is contributed by N129. One can recognise a TRUD domain in the interval 155–303; sequence GVPNYFGAQR…VEAARRAMLL (149 aa). F329 is a binding site for substrate.

The protein belongs to the pseudouridine synthase TruD family.

The catalysed reaction is uridine(13) in tRNA = pseudouridine(13) in tRNA. Its function is as follows. Responsible for synthesis of pseudouridine from uracil-13 in transfer RNAs. This chain is tRNA pseudouridine synthase D, found in Escherichia coli O6:K15:H31 (strain 536 / UPEC).